A 370-amino-acid chain; its full sequence is Sphingosine 1-phosphate receptor 2 (370 aa).

The Extracellular portion of the chain corresponds to 1–57; it reads MTTCRLFAGFCQAVTMSKYSQYFNKTLIQVHYLTAKEMTAEELRDRIESKQSLSSLN. Residue asparagine 24 is glycosylated (N-linked (GlcNAc...) asparagine). The chain crosses the membrane as a helical span at residues 58-78; that stretch reads ILFVVICSIIILENLLVLIAV. The Cytoplasmic segment spans residues 79–87; sequence FRNKKFHSA. The helical transmembrane segment at 88 to 108 threads the bilayer; it reads MFFFIGNLAFSDLLAGSAYIA. At 109-128 the chain is on the extracellular side; sequence NIFLSGPRTFHLTPVQWFIR. The chain crosses the membrane as a helical span at residues 129-149; the sequence is EGTAFIALSASVFSLLAIAIE. The Cytoplasmic portion of the chain corresponds to 150–167; it reads RYIAITKVKVYGSNKTCR. The helical transmembrane segment at 168-193 threads the bilayer; the sequence is MFLLIGACWVMSILLGGLPIIGWNCI. Residues 194 to 219 lie on the Extracellular side of the membrane; the sequence is NNLDDCSAVLPLNTRYYIRFVVTIFS. Residues 220–230 traverse the membrane as a helical segment; the sequence is IILLSIVILYV. Residues 231 to 254 are Cytoplasmic-facing; it reads RIYLIVRTSHQEATNSPAYALLKT. A helical membrane pass occupies residues 255 to 275; the sequence is VTIVLGVFIICWLPAFTILLL. Topologically, residues 276-289 are extracellular; it reads DTSCKMKQCPILNN. A helical transmembrane segment spans residues 290–310; the sequence is AGIFFSFATLNSALNPLIYTL. Topologically, residues 311-370 are cytoplasmic; sequence RSKDMRKEFLRVLCCWGLLNCGRPPHRCMVPLKSSSSMEHCTNKHEHQSIPIMQDCTTCV. Cysteine 325 carries the S-palmitoyl cysteine lipid modification.

The protein belongs to the G-protein coupled receptor 1 family.

The protein resides in the cell membrane. Receptor for the lysosphingolipid sphingosine 1-phosphate (S1P). S1P receptor is critical for cell migration and epithelial integrity during vertebrate embryogenesis. Receptor for the chemokine-like protein FAM19A5. Mediates the inhibitory effect of FAM19A5 on vascular smooth muscle cell proliferation and migration. This Danio rerio (Zebrafish) protein is Sphingosine 1-phosphate receptor 2 (s1pr2).